Here is a 147-residue protein sequence, read N- to C-terminus: Hemoglobin subunit epsilon (147 aa).

One can recognise a Globin domain in the interval 3 to 147 (HFTAEEKSTI…VATALAHKYH (145 aa)). Phosphoserine is present on residues Ser-14 and Ser-51. His-64 and His-93 together coordinate heme b.

Belongs to the globin family. In terms of assembly, heterotetramer of two alpha chains and two epsilon chains in early embryonic hemoglobin Gower-2; two zeta chains and two epsilon chains in early embryonic hemoglobin Gower-1. As to expression, red blood cells.

The epsilon chain is a beta-type chain of early mammalian embryonic hemoglobin. The chain is Hemoglobin subunit epsilon (HBE1) from Cheirogaleus medius (Fat-tailed dwarf lemur).